The primary structure comprises 344 residues: Phenylalanine--tRNA ligase alpha subunit (344 aa).

Position 256 (E256) interacts with Mg(2+).

This sequence belongs to the class-II aminoacyl-tRNA synthetase family. Phe-tRNA synthetase alpha subunit type 1 subfamily. As to quaternary structure, tetramer of two alpha and two beta subunits. Requires Mg(2+) as cofactor.

It localises to the cytoplasm. The catalysed reaction is tRNA(Phe) + L-phenylalanine + ATP = L-phenylalanyl-tRNA(Phe) + AMP + diphosphate + H(+). The polypeptide is Phenylalanine--tRNA ligase alpha subunit (Onion yellows phytoplasma (strain OY-M)).